The sequence spans 1080 residues: Carbamoyl phosphate synthase large chain (1080 aa).

Positions 1–403 are carboxyphosphate synthetic domain; sequence MPKRTDLRTI…SLQKAVRGLE (403 aa). Positions 129, 169, 175, 176, 208, 210, 215, 241, 242, 243, 285, and 299 each coordinate ATP. An ATP-grasp 1 domain is found at 133–328; it reads RVAMQEIGLE…IAKIAAKLAV (196 aa). 3 residues coordinate Mg(2+): Q285, E299, and N301. Residues Q285, E299, and N301 each contribute to the Mn(2+) site. The oligomerization domain stretch occupies residues 404–554; sequence TGKVGLEPTG…YSTYEEECEA (151 aa). The carbamoyl phosphate synthetic domain stretch occupies residues 555–942; the sequence is APSDRRKIMI…AFARAQEAGD (388 aa). An ATP-grasp 2 domain is found at 679-876; the sequence is QKLVQQLGLR…LAKIAARCMT (198 aa). ATP contacts are provided by R715, R754, L756, E761, G787, V788, H789, S790, Q830, and E847. Residues Q830, E847, and N849 each coordinate Mg(2+). Residues Q830, E847, and N849 each contribute to the Mn(2+) site. Residues 943–1080 enclose the MGS-like domain; it reads IRAPQPGRAF…LQELHKELQV (138 aa). An allosteric domain region spans residues 943–1080; it reads IRAPQPGRAF…LQELHKELQV (138 aa).

It belongs to the CarB family. In terms of assembly, composed of two chains; the small (or glutamine) chain promotes the hydrolysis of glutamine to ammonia, which is used by the large (or ammonia) chain to synthesize carbamoyl phosphate. Tetramer of heterodimers (alpha,beta)4. Requires Mg(2+) as cofactor. The cofactor is Mn(2+).

The enzyme catalyses hydrogencarbonate + L-glutamine + 2 ATP + H2O = carbamoyl phosphate + L-glutamate + 2 ADP + phosphate + 2 H(+). The catalysed reaction is hydrogencarbonate + NH4(+) + 2 ATP = carbamoyl phosphate + 2 ADP + phosphate + 2 H(+). Its pathway is amino-acid biosynthesis; L-arginine biosynthesis; carbamoyl phosphate from bicarbonate: step 1/1. It participates in pyrimidine metabolism; UMP biosynthesis via de novo pathway; (S)-dihydroorotate from bicarbonate: step 1/3. Functionally, large subunit of the glutamine-dependent carbamoyl phosphate synthetase (CPSase). CPSase catalyzes the formation of carbamoyl phosphate from the ammonia moiety of glutamine, carbonate, and phosphate donated by ATP, constituting the first step of 2 biosynthetic pathways, one leading to arginine and/or urea and the other to pyrimidine nucleotides. The large subunit (synthetase) binds the substrates ammonia (free or transferred from glutamine from the small subunit), hydrogencarbonate and ATP and carries out an ATP-coupled ligase reaction, activating hydrogencarbonate by forming carboxy phosphate which reacts with ammonia to form carbamoyl phosphate. This is Carbamoyl phosphate synthase large chain from Xylella fastidiosa (strain 9a5c).